We begin with the raw amino-acid sequence, 371 residues long: DNA replication and repair protein RecF (371 aa).

30 to 37 (GENAQGKT) lines the ATP pocket.

It belongs to the RecF family.

The protein localises to the cytoplasm. In terms of biological role, the RecF protein is involved in DNA metabolism; it is required for DNA replication and normal SOS inducibility. RecF binds preferentially to single-stranded, linear DNA. It also seems to bind ATP. In Staphylococcus epidermidis (strain ATCC 35984 / DSM 28319 / BCRC 17069 / CCUG 31568 / BM 3577 / RP62A), this protein is DNA replication and repair protein RecF.